The primary structure comprises 359 residues: Peptide chain release factor 1 (359 aa).

An N5-methylglutamine modification is found at glutamine 235. The segment at 283–305 (QKAESERSASRKTQVGSGDRSER) is disordered.

It belongs to the prokaryotic/mitochondrial release factor family. Methylated by PrmC. Methylation increases the termination efficiency of RF1.

The protein resides in the cytoplasm. Functionally, peptide chain release factor 1 directs the termination of translation in response to the peptide chain termination codons UAG and UAA. The chain is Peptide chain release factor 1 from Bartonella bacilliformis (strain ATCC 35685 / KC583 / Herrer 020/F12,63).